The primary structure comprises 554 residues: MASSQVGDMVNGNAEPTRHLAKFPPSLWGDRFTSFTLDKQLSDKYGNEIEVLKEQVRSMVVAGGRKAVEQINLINVLERLGVSYHFEKEIEEQLEQLFAKFEDNEDYDLFTIALHFRIFRQHGYKMSCDVFNKFRDSNGEFKETVSNDVQGMLSLYEATYLKIRGEGFLDEAHAFTIAQLESLVGGPHLSSDLSEQVMHALKQSIHRGFPRLEAKHFISFYEKDASRNETLLRLAKLDFNQLQLSHREELCHIFRWWKELDLISKVPYARDRAVECFFWSTCAYYEPQHSVGRAVLTKIMLLLSVTDDTYDAYGTYDEVKLYTNAVQRWDVSAMDELPDYMKALYRALLNVYDEVERDLAKQGRAYGVHHSKEAFKEIVRSYEIEAEWFKEGYVVSFEEYMKNALVTSTGRLHTTSCFMGLEADVATTEAFEWILTKPKMVATSGAIGRLVDDVMSHDEEQERGHVATGLDCYMKQHGVSKQEAIVELYKMIENAWRDINEEMLKPTAISMKLLIRVLNLSRISDVVYKYVDGYTHPEIIKDHVISLFEDPIPM.

Residues D307 and D311 each coordinate Mg(2+). A DDXXD motif motif is present at residues 326–330; sequence VQRWD. Residues D452, S456, and E460 each contribute to the Mg(2+) site.

This sequence belongs to the terpene synthase family. It depends on Mg(2+) as a cofactor.

The enzyme catalyses (2E,6E)-farnesyl diphosphate + H2O = valerianol + diphosphate. It participates in secondary metabolite biosynthesis; terpenoid biosynthesis. Terpene synthase that catalyzes the biosynthesis of the terpene valerianol, which is a volatile compound of floral scent. This is Valerianol synthase TPS1G from Camellia hiemalis (Camellia).